The chain runs to 411 residues: Alpha-galactosidase (411 aa).

A signal peptide spans 1–24 (MATHYSIIGGMIIVVLLMIIGSEG). Residues 25–47 (GRLLEKKNRTSAEAEHYNVRRYL) constitute a propeptide that is removed on maturation. The N-linked (GlcNAc...) asparagine glycan is linked to Asn32. Cysteines 68 and 100 form a disulfide. Asn145 is a glycosylation site (N-linked (GlcNAc...) asparagine). Residues Cys148 and Cys179 are joined by a disulfide bond. Catalysis depends on Asp177, which acts as the Nucleophile. A substrate-binding site is contributed by 210–214 (EWGWE). The Proton donor role is filled by Asp232. Asn352 carries N-linked (GlcNAc...) asparagine glycosylation.

Belongs to the glycosyl hydrolase 27 family.

The enzyme catalyses Hydrolysis of terminal, non-reducing alpha-D-galactose residues in alpha-D-galactosides, including galactose oligosaccharides, galactomannans and galactolipids.. Functionally, involved in the hydrolysis of the galactomannan, it splits alpha-linked galactose moieties. It is particularly suitable for the hydrolysis of guar gum to a gum with improved gelling properties. Preferentially cleaves alpha-1,6 glycoside linkages. The protein is Alpha-galactosidase of Cyamopsis tetragonoloba (Guar).